We begin with the raw amino-acid sequence, 346 residues long: DNA primase small subunit PriS (346 aa).

Catalysis depends on residues aspartate 95 and aspartate 97. Zn(2+)-binding residues include cysteine 106, histidine 108, cysteine 114, and cysteine 117. The Zinc knuckle motif signature appears at 106 to 117 (CEHEPGTVCPIC). Residue aspartate 280 is part of the active site.

Belongs to the eukaryotic-type primase small subunit family. In terms of assembly, heterodimer of a small subunit (PriS) and a large subunit (PriL). It depends on Mg(2+) as a cofactor. Mn(2+) serves as cofactor.

Catalytic subunit of DNA primase, an RNA polymerase that catalyzes the synthesis of short RNA molecules used as primers for DNA polymerase during DNA replication. The small subunit contains the primase catalytic core and has DNA synthesis activity on its own. Binding to the large subunit stabilizes and modulates the activity, increasing the rate of DNA synthesis while decreasing the length of the DNA fragments, and conferring RNA synthesis capability. The DNA polymerase activity may enable DNA primase to also catalyze primer extension after primer synthesis. May also play a role in DNA repair. This Pyrococcus horikoshii (strain ATCC 700860 / DSM 12428 / JCM 9974 / NBRC 100139 / OT-3) protein is DNA primase small subunit PriS.